The primary structure comprises 451 residues: Phosphoglucosamine mutase (451 aa).

The active-site Phosphoserine intermediate is the Ser-107. Ser-107, Asp-246, Asp-248, and Asp-250 together coordinate Mg(2+). At Ser-107 the chain carries Phosphoserine.

Belongs to the phosphohexose mutase family. Requires Mg(2+) as cofactor. Activated by phosphorylation.

The catalysed reaction is alpha-D-glucosamine 1-phosphate = D-glucosamine 6-phosphate. Catalyzes the conversion of glucosamine-6-phosphate to glucosamine-1-phosphate. The chain is Phosphoglucosamine mutase from Burkholderia vietnamiensis (strain G4 / LMG 22486) (Burkholderia cepacia (strain R1808)).